Here is a 141-residue protein sequence, read N- to C-terminus: Protein GAT3 (141 aa).

The GATA-type zinc-finger motif lies at 72-98; it reads CPQCAVIKTSPQWREGPDGEVTLCNAC.

This chain is Protein GAT3 (GAT3), found in Saccharomyces cerevisiae (strain ATCC 204508 / S288c) (Baker's yeast).